The primary structure comprises 308 residues: U-box domain-containing protein 54 (308 aa).

Residues Phe-172–Glu-235 form a disordered region. Over residues Glu-210–Glu-227 the composition is skewed to basic and acidic residues. The U-box domain maps to Pro-232–Tyr-306.

The enzyme catalyses S-ubiquitinyl-[E2 ubiquitin-conjugating enzyme]-L-cysteine + [acceptor protein]-L-lysine = [E2 ubiquitin-conjugating enzyme]-L-cysteine + N(6)-ubiquitinyl-[acceptor protein]-L-lysine.. Its pathway is protein modification; protein ubiquitination. In terms of biological role, functions as an E3 ubiquitin ligase. The protein is U-box domain-containing protein 54 (PUB54) of Arabidopsis thaliana (Mouse-ear cress).